The sequence spans 356 residues: Stomatin-like protein 2, mitochondrial (356 aa).

A mitochondrion-targeting transit peptide spans 1–28; it reads MLARAARGTGALLLRGSLLASGRAPRRA. Position 17 is a phosphoserine; by PKC/PRKCZ (S17). Y124 bears the Phosphotyrosine mark. At K145 the chain carries N6-acetyllysine; alternate. The residue at position 145 (K145) is an N6-succinyllysine; alternate. Residues 215-252 are a coiled coil; that stretch reads INVAEGKKQAQILASEAEKAEQINQAAGEASAVLAKAK. K233 carries the post-translational modification N6-acetyllysine. The segment at 321–356 is disordered; it reads KAPVPGTPDSLSSGSSRDVQGTDASLDEELDRVKMS. The residue at position 327 (T327) is a Phosphothreonine. Over residues 329–343 the composition is skewed to polar residues; it reads DSLSSGSSRDVQGTD. Phosphoserine is present on S330.

It belongs to the band 7/mec-2 family. Forms homooligomers. Interacts with MFN2; may form heterooligomers. Interacts with CACNA2D2. Interacts with PHB1 and PHB2; recruits them to cardiolipin-enriched mitochondrial membranes and stabilizes them. Hyperphosphorylated at Ser-17 in some patients with monoclonal gammopathy of undetermined significance (MGUS), multiple myeloma (MM) and Waldenstrom macroglobulinemia due to impaired dephosphorylation by PP2A. In terms of tissue distribution, ubiquitously expressed at low levels. Expressed in lymphoid tissues (at protein level).

Its subcellular location is the cell membrane. The protein resides in the mitochondrion. It is found in the mitochondrion inner membrane. The protein localises to the mitochondrion intermembrane space. It localises to the membrane raft. Its subcellular location is the cytoplasm. The protein resides in the cytoskeleton. Functionally, mitochondrial protein that probably regulates the biogenesis and the activity of mitochondria. Stimulates cardiolipin biosynthesis, binds cardiolipin-enriched membranes where it recruits and stabilizes some proteins including prohibitin and may therefore act in the organization of functional microdomains in mitochondrial membranes. Through regulation of the mitochondrial function may play a role into several biological processes including cell migration, cell proliferation, T-cell activation, calcium homeostasis and cellular response to stress. May play a role in calcium homeostasis through negative regulation of calcium efflux from mitochondria. Required for mitochondrial hyperfusion a pro-survival cellular response to stress which results in increased ATP production by mitochondria. May also regulate the organization of functional domains at the plasma membrane and play a role in T-cell activation through association with the T-cell receptor signaling complex and its regulation. This Homo sapiens (Human) protein is Stomatin-like protein 2, mitochondrial (STOML2).